The following is an 86-amino-acid chain: Large ribosomal subunit protein bL31 (86 aa).

Residues 65–86 form a disordered region; that stretch reads YRMASSDSSEQKDKSSEEKKES. The segment covering 73-86 has biased composition (basic and acidic residues); that stretch reads SEQKDKSSEEKKES.

The protein belongs to the bacterial ribosomal protein bL31 family. Type A subfamily. In terms of assembly, part of the 50S ribosomal subunit.

Binds the 23S rRNA. This is Large ribosomal subunit protein bL31 from Prochlorococcus marinus (strain NATL1A).